Consider the following 368-residue polypeptide: Ferrochelatase (368 aa).

Fe cation-binding residues include H209 and E290. A disordered region spans residues A341–Q368.

Belongs to the ferrochelatase family.

It localises to the cytoplasm. The catalysed reaction is heme b + 2 H(+) = protoporphyrin IX + Fe(2+). It functions in the pathway porphyrin-containing compound metabolism; protoheme biosynthesis; protoheme from protoporphyrin-IX: step 1/1. In terms of biological role, catalyzes the ferrous insertion into protoporphyrin IX. The protein is Ferrochelatase of Nitrosococcus oceani (strain ATCC 19707 / BCRC 17464 / JCM 30415 / NCIMB 11848 / C-107).